The sequence spans 465 residues: Hexokinase-4 (465 aa).

A Hexokinase domain is found at A10–A454. Positions E67 to V203 are hexokinase small subdomain. D78–N83 is a binding site for ATP. Residues S151 to F152, T168 to K169, and N204 to D205 each bind substrate. The tract at residues N204–E443 is hexokinase large subdomain. T228 lines the ATP pocket. Substrate is bound by residues N231, E256, and E290. ATP contacts are provided by residues G295–K296, T332–S336, and S411–L415.

It belongs to the hexokinase family. Monomer. Interacts with MIDN; the interaction occurs preferentially at low glucose levels and results in inhibition of hexokinase activity. Interacts with GCKR; leading to sequestration in the nucleus.

It localises to the cytoplasm. The protein resides in the nucleus. The protein localises to the mitochondrion. The catalysed reaction is a D-hexose + ATP = a D-hexose 6-phosphate + ADP + H(+). The enzyme catalyses D-fructose + ATP = D-fructose 6-phosphate + ADP + H(+). It carries out the reaction D-glucose + ATP = D-glucose 6-phosphate + ADP + H(+). It catalyses the reaction D-mannose + ATP = D-mannose 6-phosphate + ADP + H(+). The protein operates within carbohydrate metabolism; hexose metabolism. Its pathway is carbohydrate degradation; glycolysis; D-glyceraldehyde 3-phosphate and glycerone phosphate from D-glucose: step 1/4. Subject to allosteric regulation. Low glucose and high fructose-6-phosphate triggers association with the inhibitor GCKR followed by sequestration in the nucleus. Its function is as follows. Catalyzes the phosphorylation of hexose, such as D-glucose, D-fructose and D-mannose, to hexose 6-phosphate (D-glucose 6-phosphate, D-fructose 6-phosphate and D-mannose 6-phosphate, respectively). Compared to other hexokinases, has a weak affinity for D-glucose, and is effective only when glucose is abundant. Mainly expressed in pancreatic beta cells and the liver and constitutes a rate-limiting step in glucose metabolism in these tissues. Since insulin secretion parallels glucose metabolism and the low glucose affinity of GCK ensures that it can change its enzymatic activity within the physiological range of glucose concentrations, GCK acts as a glucose sensor in the pancreatic beta cell. In pancreas, plays an important role in modulating insulin secretion. In liver, helps to facilitate the uptake and conversion of glucose by acting as an insulin-sensitive determinant of hepatic glucose usage. Required to provide D-glucose 6-phosphate for the synthesis of glycogen. Mediates the initial step of glycolysis by catalyzing phosphorylation of D-glucose to D-glucose 6-phosphate. The sequence is that of Hexokinase-4 from Homo sapiens (Human).